The primary structure comprises 217 residues: MSLATIAENYMMHNETQRAIVPYVPPPYAYANAPTLGGQAGEMESMSLGILNQAMSSTTGASGALKDEKAAFGAMAEALRDPEPIRQIKKHVGLRTLKHLKIELASMRRRYAILRVVILMSGCVTMATSMAGGLTIIDKDIYQDLNGDGWLSKTIHGLNLLCTTMLLAAGKISDKIQEEISRTKRDIAKIESYVSAASMSWSGDTSVPLKEVKYGDS.

The protein belongs to the orbivirus NS3 family.

Functionally, may play a role in the release of virions from infected cells. The chain is Non-structural protein NS3 (Segment-10) from Camelus dromedarius (Dromedary).